Here is a 514-residue protein sequence, read N- to C-terminus: Chromosomal replication initiator protein DnaA (514 aa).

The segment at 1-90 (MSVELWQQCV…KRSRTPRAAI (90 aa)) is domain I, interacts with DnaA modulators. The segment at 91–177 (VPSQTHVAPP…QVEGALKHTS (87 aa)) is domain II. A domain III, AAA+ region region spans residues 178 to 394 (YLNRTFTFEN…GALKRVIAHS (217 aa)). ATP-binding residues include Gly-222, Gly-224, Lys-225, and Thr-226. The domain IV, binds dsDNA stretch occupies residues 395 to 514 (HFMGRPITIE…YKNLLRTLTT (120 aa)).

It belongs to the DnaA family. As to quaternary structure, oligomerizes as a right-handed, spiral filament on DNA at oriC.

The protein resides in the cytoplasm. In terms of biological role, plays an essential role in the initiation and regulation of chromosomal replication. ATP-DnaA binds to the origin of replication (oriC) to initiate formation of the DNA replication initiation complex once per cell cycle. Binds the DnaA box (a 9 base pair repeat at the origin) and separates the double-stranded (ds)DNA. Forms a right-handed helical filament on oriC DNA; dsDNA binds to the exterior of the filament while single-stranded (ss)DNA is stabiized in the filament's interior. The ATP-DnaA-oriC complex binds and stabilizes one strand of the AT-rich DNA unwinding element (DUE), permitting loading of DNA polymerase. After initiation quickly degrades to an ADP-DnaA complex that is not apt for DNA replication. Binds acidic phospholipids. In Pseudomonas aeruginosa (strain LESB58), this protein is Chromosomal replication initiator protein DnaA.